Here is a 1130-residue protein sequence, read N- to C-terminus: ABC transporter ATM1 (1130 aa).

Residues 1–65 constitute a mitochondrion transit peptide; sequence MQPPTRAPFF…ESFHSSAFQL (65 aa). Disordered stretches follow at residues 191 to 212, 276 to 315, and 341 to 385; these read DAWT…CVRP, HHAP…RNMS, and STFS…TSSP. Polar residues-rich tracts occupy residues 195–206 and 305–315; these read SGCSGQTDNATA and GSLTLSPRNMS. The helical transmembrane segment at 406 to 426 threads the bilayer; the sequence is PNPTSLQLLFSLFPFLWPTAL. Residues 468 to 502 show a composition bias toward low complexity; sequence PLSPSGASPSSGDTSLLASSGETSSSLSPSAAPAE. The segment at 468 to 554 is disordered; the sequence is PLSPSGASPS…AGKAGTSVGG (87 aa). A compositionally biased stretch (basic and acidic residues) spans 503–523; that stretch reads GAREAGKSGESAGRERRDEGS. 5 consecutive transmembrane segments (helical) span residues 574-594, 653-673, 678-698, 761-781, and 791-811; these read IVSV…AATG, VLLF…YLLG, GPVA…TAAV, LAFL…GSLA, and LLPV…AVPL. Positions 587-823 constitute an ABC transmembrane type-1 domain; sequence VARIAATGFN…VGTIYRETSL (237 aa). Positions 857 to 1111 constitute an ABC transporter domain; sequence VAFENVRFAY…ERGLYRALWE (255 aa). Residue 910-917 participates in ATP binding; the sequence is GPSGVGKS.

This sequence belongs to the ABC transporter superfamily. ABCB family. Heavy Metal importer (TC 3.A.1.210) subfamily. As to quaternary structure, homodimer.

The protein localises to the mitochondrion membrane. Probably transports iron-sulfur clusters in an ATP-dependent manner. Plays a role in [Fe-S] proteins homeostasis. Required for optimal parasite growth and lytic cycle. This Toxoplasma gondii (strain ATCC 50611 / Me49) protein is ABC transporter ATM1.